The sequence spans 394 residues: Queuine tRNA-ribosyltransferase accessory subunit 2 (394 aa).

Zn(2+)-binding residues include Cys336, Cys338, Cys341, and His367.

The protein belongs to the queuine tRNA-ribosyltransferase family. QTRT2 subfamily. As to quaternary structure, heterodimer of a catalytic subunit and an accessory subunit. Requires Zn(2+) as cofactor.

It is found in the cytoplasm. Its function is as follows. Non-catalytic subunit of the queuine tRNA-ribosyltransferase (TGT) that catalyzes the base-exchange of a guanine (G) residue with queuine (Q) at position 34 (anticodon wobble position) in tRNAs with GU(N) anticodons (tRNA-Asp, -Asn, -His and -Tyr), resulting in the hypermodified nucleoside queuosine (7-(((4,5-cis-dihydroxy-2-cyclopenten-1-yl)amino)methyl)-7-deazaguanosine). The polypeptide is Queuine tRNA-ribosyltransferase accessory subunit 2 (Ixodes scapularis (Black-legged tick)).